Consider the following 125-residue polypeptide: Small ribosomal subunit protein uS13 (125 aa).

The tract at residues 93–125 (RAGLPVRGQRTRTNARTRRGARKTVAGKKKATR) is disordered. Over residues 101-125 (QRTRTNARTRRGARKTVAGKKKATR) the composition is skewed to basic residues.

It belongs to the universal ribosomal protein uS13 family. As to quaternary structure, part of the 30S ribosomal subunit. Forms a loose heterodimer with protein S19. Forms two bridges to the 50S subunit in the 70S ribosome.

Located at the top of the head of the 30S subunit, it contacts several helices of the 16S rRNA. In the 70S ribosome it contacts the 23S rRNA (bridge B1a) and protein L5 of the 50S subunit (bridge B1b), connecting the 2 subunits; these bridges are implicated in subunit movement. Contacts the tRNAs in the A and P-sites. This is Small ribosomal subunit protein uS13 from Synechococcus elongatus (strain ATCC 33912 / PCC 7942 / FACHB-805) (Anacystis nidulans R2).